Consider the following 320-residue polypeptide: Methionyl-tRNA formyltransferase (320 aa).

114 to 117 serves as a coordination point for (6S)-5,6,7,8-tetrahydrofolate; the sequence is SLLP.

Belongs to the Fmt family.

The catalysed reaction is L-methionyl-tRNA(fMet) + (6R)-10-formyltetrahydrofolate = N-formyl-L-methionyl-tRNA(fMet) + (6S)-5,6,7,8-tetrahydrofolate + H(+). Attaches a formyl group to the free amino group of methionyl-tRNA(fMet). The formyl group appears to play a dual role in the initiator identity of N-formylmethionyl-tRNA by promoting its recognition by IF2 and preventing the misappropriation of this tRNA by the elongation apparatus. The protein is Methionyl-tRNA formyltransferase of Acinetobacter baumannii (strain ACICU).